The chain runs to 248 residues: Probable transcriptional regulatory protein Pfl01_4410 (248 aa).

This sequence belongs to the TACO1 family.

It localises to the cytoplasm. In Pseudomonas fluorescens (strain Pf0-1), this protein is Probable transcriptional regulatory protein Pfl01_4410.